We begin with the raw amino-acid sequence, 347 residues long: MNRKVAIVTGTNSNLGLNIVFRLIETEDTNVRLTIVVTSRTLPRVQEVINQIKDFYNKSGRVEDLEIDFDYLLVDFTNMVSVLNAYYDINKKYRAINYLFVNAAQGIFDGIDWIGAVKEVFTNPLEAVTNPTYKIQLVGVKSKDDMGLIFQANVFGPYYFISKILPQLTRGKAYIVWISSIMSDPKYLSLNDIELLKTNASYEGSKRLVDLLHLATYKDLKKLGINQYVVQPGIFTSHSFSEYLNFFTYFGMLCLFYLARLLGSPWHNIDGYKAANAPVYVTRLANPNFEKQDVKYGSATSRDGMPYIKTQEIDPTGMSDVFAYIQKKKLEWDEKLKDQIVETRTPI.

Leu15, Thr38, and Arg44 together coordinate NADP(+). Catalysis depends on proton donor residues Ser179 and Tyr202. Residues Tyr202, Lys206, and Ser237 each coordinate NADP(+). The Lowers pKa of active site Tyr role is filled by Lys206. Phosphothreonine is present on Thr345.

Belongs to the short-chain dehydrogenases/reductases (SDR) family. ERG27 subfamily. Heterotetramer of ERG25, ERG26, ERG27 and ERG28. ERG28 acts as a scaffold to tether ERG27 and other 4,4-demethylation-related enzymes, forming a demethylation enzyme complex, in the endoplasmic reticulum. Interacts with ERG25 and ERG28. Also interacts with ERG7, but only in lipid particles.

Its subcellular location is the endoplasmic reticulum membrane. It localises to the lipid droplet. The enzyme catalyses 3-dehydro-4alpha-methylzymosterol + NADPH + H(+) = 4alpha-methylzymosterol + NADP(+). The protein operates within steroid biosynthesis; zymosterol biosynthesis; zymosterol from lanosterol: step 5/6. Its function is as follows. 3-keto-steroid reductase; part of the third module of ergosterol biosynthesis pathway that includes the late steps of the pathway. ERG27 is a catalytic component of the C-4 demethylation complex that catalyze the reduction of the keto group on the C-3. The third module or late pathway involves the ergosterol synthesis itself through consecutive reactions that mainly occur in the endoplasmic reticulum (ER) membrane. Firstly, the squalene synthase ERG9 catalyzes the condensation of 2 farnesyl pyrophosphate moieties to form squalene, which is the precursor of all steroids. Squalene synthase is crucial for balancing the incorporation of farnesyl diphosphate (FPP) into sterol and nonsterol isoprene synthesis. Secondly, the squalene epoxidase ERG1 catalyzes the stereospecific oxidation of squalene to (S)-2,3-epoxysqualene, which is considered to be a rate-limiting enzyme in steroid biosynthesis. Then, the lanosterol synthase ERG7 catalyzes the cyclization of (S)-2,3 oxidosqualene to lanosterol, a reaction that forms the sterol core. In the next steps, lanosterol is transformed to zymosterol through a complex process involving various demethylation, reduction and desaturation reactions. The lanosterol 14-alpha-demethylase ERG11 (also known as CYP51) catalyzes C14-demethylation of lanosterol to produce 4,4'-dimethyl cholesta-8,14,24-triene-3-beta-ol, which is critical for ergosterol biosynthesis. The C-14 reductase ERG24 reduces the C14=C15 double bond of 4,4-dimethyl-cholesta-8,14,24-trienol to produce 4,4-dimethyl-cholesta-8,24-dienol. 4,4-dimethyl-cholesta-8,24-dienol is substrate of the C-4 demethylation complex ERG25-ERG26-ERG27 in which ERG25 catalyzes the three-step monooxygenation required for the demethylation of 4,4-dimethyl and 4alpha-methylsterols, ERG26 catalyzes the oxidative decarboxylation that results in a reduction of the 3-beta-hydroxy group at the C-3 carbon to an oxo group, and ERG27 is responsible for the reduction of the keto group on the C-3. ERG28 has a role as a scaffold to help anchor ERG25, ERG26 and ERG27 to the endoplasmic reticulum and ERG29 regulates the activity of the iron-containing C4-methylsterol oxidase ERG25. Then, the sterol 24-C-methyltransferase ERG6 catalyzes the methyl transfer from S-adenosyl-methionine to the C-24 of zymosterol to form fecosterol. The C-8 sterol isomerase ERG2 catalyzes the reaction which results in unsaturation at C-7 in the B ring of sterols and thus converts fecosterol to episterol. The sterol-C5-desaturase ERG3 then catalyzes the introduction of a C-5 double bond in the B ring to produce 5-dehydroepisterol. The C-22 sterol desaturase ERG5 further converts 5-dehydroepisterol into ergosta-5,7,22,24(28)-tetraen-3beta-ol by forming the C-22(23) double bond in the sterol side chain. Finally, ergosta-5,7,22,24(28)-tetraen-3beta-ol is substrate of the C-24(28) sterol reductase ERG4 to produce ergosterol. Facilitates the association of ERG7 with lipid particles preventing its digestion in the endoplasmic reticulum and the lipid particles. This chain is 3-keto-steroid reductase ERG27, found in Saccharomyces cerevisiae (strain ATCC 204508 / S288c) (Baker's yeast).